The primary structure comprises 698 residues: Interleukin enhancer-binding factor 3 (698 aa).

Positions 5–379 (RIFLNDDRHV…ALKRPMEEDG (375 aa)) constitute a DZF domain. Disordered stretches follow at residues 51–88 (QQEKDCSGEQEQPEPEEPETTEEGKDSEGKTGENPTRT), 374–403 (PMEEDGEDKSPSKKKKKIQKKDEKSEPPQA), and 473–522 (EEKE…KHGK). The span at 61 to 71 (EQPEPEEPETT) shows a compositional bias: acidic residues. Basic and acidic residues-rich tracts occupy residues 72 to 81 (EEGKDSEGKT) and 374 to 384 (PMEEDGEDKSP). A Bipartite nuclear localization signal motif is present at residues 372–390 (KRPMEEDGEDKSPSKKKKK). Residues 399–468 (EPPQAMNALM…AVKVLQDMGL (70 aa)) enclose the DRBM 1 domain. Over residues 490 to 503 (TPAQPADSTQTDSA) the composition is skewed to polar residues. In terms of domain architecture, DRBM 2 spans 520–586 (HGKNPVMELN…ALAALEKLFP (67 aa)).

A component of a ybx2/frgy2-containing mRNA-ribonucleoprotein (mRNP) complex. Also a component of the CCAAT box transcription factor (CBTF) complex. In terms of processing, phosphorylated. Phosphorylation affects nuclear translocation. Methylated by protein arginine N-methyltransferase 1 (prmt1b) in the RGG-rich domain. Methylation decreases DNA-binding and thereby decreases transcription of the gata2 gene, but does not regulate dsRNA binding or subcellular localization.

The protein localises to the nucleus. The protein resides in the cytoplasm. In terms of biological role, RNA-binding protein that plays an essential role in the biogenesis of circular RNAs (circRNAs) which are produced by back-splicing circularization of pre-mRNAs. Within the nucleus, promotes circRNAs processing by stabilizing the regulatory elements residing in the flanking introns of the circularized exons. Plays thereby a role in the back-splicing of a subset of circRNAs. As a consequence, participates in a wide range of transcriptional and post-transcriptional processes. Binds to poly-U elements and AU-rich elements (AREs) in the 3'-UTR of target mRNAs. Upon viral infection, ILF3 accumulates in the cytoplasm and participates in the innate antiviral response. Mechanistically, ILF3 becomes phosphorylated and activated by the double-stranded RNA-activated protein kinase/PKR which releases ILF3 from cellular mature circRNAs. In turn, unbound ILF3 molecules are able to interact with and thus inhibit viral mRNAs. Has a cytoplasmic role early in development as part of a ribonucleoprotein (mRNP) complex which may regulate mRNA transport and/or translation. Following nuclear localization at the mid-blastula transition, acts as a transcription factor and binds the 5'-CCAAT-3' promoter sequence to regulate transcription of the gata2 gene as a subunit of the CCAAT box transcription factor (CBTF). Its role as an mRNP component negatively regulates its activity as a transcription factor by precluding its nuclear localization. The protein is Interleukin enhancer-binding factor 3 of Xenopus tropicalis (Western clawed frog).